The primary structure comprises 150 residues: MKCPFCNFSDSKVVDSRPDKGGAAIRRRRECESCGKRFTTHERVEEVLPLVTKRDGRREPFERMKLVNGIQKACEKRPVSVETIEKMVDRLETRLQESGEREIPTTTLGEWIMSELHGVDQVAYVRFASVYRSFKDINEFMEELQDLLKK.

A zinc finger spans residues 3–34; the sequence is CPFCNFSDSKVVDSRPDKGGAAIRRRRECESC. One can recognise an ATP-cone domain in the interval 49-139; sequence PLVTKRDGRR…VYRSFKDINE (91 aa).

It belongs to the NrdR family. The cofactor is Zn(2+).

Negatively regulates transcription of bacterial ribonucleotide reductase nrd genes and operons by binding to NrdR-boxes. This is Transcriptional repressor NrdR from Citrifermentans bemidjiense (strain ATCC BAA-1014 / DSM 16622 / JCM 12645 / Bem) (Geobacter bemidjiensis).